A 237-amino-acid polypeptide reads, in one-letter code: Putative glutathione-dependent formaldehyde-activating enzyme (237 aa).

Positions 38 to 152 (ITLICHCPPS…LGQSGGSEGE (115 aa)) constitute a CENP-V/GFA domain. Cys42, Cys44, Cys67, Cys69, Cys72, Cys114, and Cys117 together coordinate Zn(2+).

The protein belongs to the Gfa family. It depends on Zn(2+) as a cofactor.

It catalyses the reaction S-(hydroxymethyl)glutathione = glutathione + formaldehyde. Its pathway is one-carbon metabolism; formaldehyde degradation; formate from formaldehyde (glutathione route): step 1/3. Catalyzes the condensation of formaldehyde and glutathione to S-hydroxymethylglutathione. This Sordaria macrospora (strain ATCC MYA-333 / DSM 997 / K(L3346) / K-hell) protein is Putative glutathione-dependent formaldehyde-activating enzyme.